A 352-amino-acid chain; its full sequence is C-C chemokine receptor type 5 (352 aa).

Over 1 to 30 (MDYQVSSPTYDIDYYTSEPCQKINVKQIAA) the chain is Extracellular. Residue tyrosine 3 is modified to Sulfotyrosine. O-linked (GalNAc...) serine glycans are attached at residues serine 6 and serine 7. Sulfotyrosine is present on residues tyrosine 10, tyrosine 14, and tyrosine 15. Intrachain disulfides connect cysteine 20–cysteine 269 and cysteine 101–cysteine 178. Residues 31 to 58 (RLLPPLYSLVFIFGFVGNILVVLILINC) traverse the membrane as a helical segment. The Cytoplasmic portion of the chain corresponds to 59–68 (KRLKSMTDIY). Residues 69 to 89 (LLNLAISDLLFLLTVPFWAHY) traverse the membrane as a helical segment. The Extracellular segment spans residues 90–102 (AAAQWDFGNTMCQ). The chain crosses the membrane as a helical span at residues 103–124 (LLTGLYFIGFFSGIFFIILLTI). Residues 125–141 (DRYLAIVHAVFALKART) are Cytoplasmic-facing. Residues 142–166 (VTFGVVTSVITWVVAVFASLPGIIF) traverse the membrane as a helical segment. Topologically, residues 167-198 (TRSQREGLHYTCSSHFPYSQYQFWKNFQTLKI) are extracellular. A helical transmembrane segment spans residues 199-218 (VILGLVLPLLVMVICYSGIL). Residues 219 to 235 (KTLLRCRNEKKRHRAVR) lie on the Cytoplasmic side of the membrane. The helical transmembrane segment at 236 to 260 (LIFTIMIVYFLFWAPYNIVLLLNTF) threads the bilayer. Over 261–277 (QEFFGLNNCSSSNRLDQ) the chain is Extracellular. A helical membrane pass occupies residues 278–301 (AMQVTETLGMTHCCINPIIYAFVG). Residues 302–352 (EKFRNYLLVFFQKHIAKRFCKCCSIFQQEASERASSVYTRSTGEQEISVGL) are Cytoplasmic-facing. 3 S-palmitoyl cysteine lipidation sites follow: cysteine 321, cysteine 323, and cysteine 324. Serine 336, serine 337, serine 342, and serine 349 each carry phosphoserine; by BARK1.

It belongs to the G-protein coupled receptor 1 family. Interacts with PRAF2. Efficient ligand binding to CCL3/MIP-1alpha and CCL4/MIP-1beta requires sulfation, O-glycosylation and sialic acid modifications. Glycosylation on Ser-6 is required for efficient binding of CCL4. Interacts with GRK2. Interacts with ARRB1 and ARRB2. Interacts with CNIH4. Interacts with S100A4; this interaction stimulates T-lymphocyte chemotaxis. Sulfated on at least 2 of the N-terminal tyrosines. Sulfation is required for efficient binding of the chemokines, CCL3 and CCL4. Post-translationally, palmitoylation in the C-terminal is important for cell surface expression. In terms of processing, phosphorylation on serine residues in the C-terminal is stimulated by binding CC chemokines especially by APO-RANTES. O-glycosylated, but not N-glycosylated. Ser-6 appears to be the major site even if Ser-7 may be also O-glycosylated. Also sialylated glycans present which contribute to chemokine binding. Thr-16 and Ser-17 may also be glycosylated and, if so, with small moieties such as a T-antigen.

It localises to the cell membrane. Receptor for a number of inflammatory CC-chemokines including CCL3/MIP-1-alpha, CCL4/MIP-1-beta and RANTES and subsequently transduces a signal by increasing the intracellular calcium ion level. May play a role in the control of granulocytic lineage proliferation or differentiation. Participates in T-lymphocyte migration to the infection site by acting as a chemotactic receptor. In Cercocebus galeritus (Tana river mangabey), this protein is C-C chemokine receptor type 5 (CCR5).